The chain runs to 97 residues: Small ribosomal subunit protein bS6 (97 aa).

Belongs to the bacterial ribosomal protein bS6 family.

Its function is as follows. Binds together with bS18 to 16S ribosomal RNA. This Dictyoglomus turgidum (strain DSM 6724 / Z-1310) protein is Small ribosomal subunit protein bS6.